Reading from the N-terminus, the 383-residue chain is Putative type I specificity subunit S.MgeORF438P (383 aa).

Positions 1-142 (MTPKLKLNNN…KELEIPFTSN (142 aa)) are TRD1. The conserved region 1 stretch occupies residues 143-182 (KNEQHAIANTLSVFDERLENLASLIEINRKLRDEYAHKLF). Residues 143–182 (KNEQHAIANTLSVFDERLENLASLIEINRKLRDEYAHKLF) are a coiled coil. Residues 183–330 (SLDEAFLSHW…GEIKVPYVKS (148 aa)) form a TRD2 region. Positions 331–370 (FQLQRKAGKIVFLLDQKLDQYKKELSSLTVIRDTLLKKLF) are conserved region 2. Positions 331–370 (FQLQRKAGKIVFLLDQKLDQYKKELSSLTVIRDTLLKKLF) form a coiled coil.

Belongs to the type-I restriction system S methylase family.

Functionally, the specificity (S) subunit of a type I restriction enzyme; this subunit dictates DNA sequence specificity. This bacterium does not encode the associated endonuclease or methylase subunits. The sequence is that of Putative type I specificity subunit S.MgeORF438P from Mycoplasma genitalium (strain ATCC 33530 / DSM 19775 / NCTC 10195 / G37) (Mycoplasmoides genitalium).